We begin with the raw amino-acid sequence, 309 residues long: Elongation factor Ts, mitochondrial (309 aa).

It belongs to the EF-Ts family.

The protein localises to the mitochondrion. Functionally, associates with the EF-Tu.GDP complex and induces the exchange of GDP to GTP. It remains bound to the aminoacyl-tRNA.EF-Tu.GTP complex up to the GTP hydrolysis stage on the ribosome. This chain is Elongation factor Ts, mitochondrial (tsfm), found in Salmo salar (Atlantic salmon).